The chain runs to 212 residues: Ribonuclease HII (212 aa).

An RNase H type-2 domain is found at 22–212 (ILIAGLDEAG…APLKGMIDGL (191 aa)). The a divalent metal cation site is built by D28, E29, and D123.

Belongs to the RNase HII family. The cofactor is Mn(2+). Mg(2+) is required as a cofactor.

The protein localises to the cytoplasm. The catalysed reaction is Endonucleolytic cleavage to 5'-phosphomonoester.. Its function is as follows. Endonuclease that specifically degrades the RNA of RNA-DNA hybrids. The chain is Ribonuclease HII from Dehalococcoides mccartyi (strain ATCC BAA-2100 / JCM 16839 / KCTC 5957 / BAV1).